The following is a 661-amino-acid chain: WD repeat-containing protein 26 (661 aa).

Over residues 1–27 (MQANGAGGGGGGGGGGGGGGGGGGGQG) the composition is skewed to gly residues. 2 disordered regions span residues 1–70 (MQAN…ASNN) and 99–118 (TAAS…KKKK). Composition is skewed to low complexity over residues 56–70 (ANGL…ASNN) and 99–113 (TAAS…LGSS). Phosphoserine occurs at positions 121 and 123. The LisH domain maps to 123-155 (SDEDVIRLIGQHLNGLGLNQTVDLLMQESGCRL). The region spanning 156 to 231 (EHPSATKFRN…EYLEDGKVLE (76 aa)) is the CTLH domain. WD repeat units follow at residues 353–392 (EHCN…HLLK), 399–438 (GHAY…GELR), 444–484 (SHED…DSWE), 524–563 (QEDH…LVRK), 566–608 (GVTQ…PIAE), and 611–651 (GHTR…DHQN).

In terms of assembly, forms homooligomers. Identified in the CTLH complex that contains GID4, RANBP9 and/or RANBP10, MKLN1, MAEA, RMND5A (or alternatively its paralog RMND5B), GID8, ARMC8, WDR26 and YPEL5. Within this complex, MAEA, RMND5A (or alternatively its paralog RMND5B), GID8, WDR26, and RANBP9 and/or RANBP10 form the catalytic core, while GID4, MKLN1, ARMC8 and YPEL5 have ancillary roles. Interacts with DDB1-CUL4A/B E3 ligase complexes. Forms a complex composed of at least WDR26, a G-beta:gamma unit, and PLCB2. Interacts with AXIN1. Broadly expressed, with highest levels in heart and skeletal muscle.

The protein resides in the cytoplasm. It localises to the nucleus. Its subcellular location is the mitochondrion. Its function is as follows. G-beta-like protein involved in cell signal transduction. Acts as a negative regulator in MAPK signaling pathway. Functions as a scaffolding protein to promote G beta:gamma-mediated PLCB2 plasma membrane translocation and subsequent activation in leukocytes. Core component of the CTLH E3 ubiquitin-protein ligase complex that selectively accepts ubiquitin from UBE2H and mediates ubiquitination and subsequent proteasomal degradation of the transcription factor HBP1. Acts as a negative regulator of the canonical Wnt signaling pathway through preventing ubiquitination of beta-catenin CTNNB1 by the beta-catenin destruction complex, thus negatively regulating CTNNB1 degradation. Serves as a scaffold to coordinate PI3K/AKT pathway-driven cell growth and migration. Protects cells from oxidative stress-induced apoptosis via the down-regulation of AP-1 transcriptional activity as well as by inhibiting cytochrome c release from mitochondria. Also protects cells by promoting hypoxia-mediated autophagy and mitophagy. This Homo sapiens (Human) protein is WD repeat-containing protein 26 (WDR26).